Reading from the N-terminus, the 335-residue chain is Lipoyl synthase (335 aa).

[4Fe-4S] cluster is bound by residues C55, C60, C66, C81, C85, C88, and S292. A Radical SAM core domain is found at 67-281 (WEDREATFLI…SQRAEEIGFQ (215 aa)).

This sequence belongs to the radical SAM superfamily. Lipoyl synthase family. [4Fe-4S] cluster serves as cofactor.

The protein localises to the cytoplasm. It carries out the reaction [[Fe-S] cluster scaffold protein carrying a second [4Fe-4S](2+) cluster] + N(6)-octanoyl-L-lysyl-[protein] + 2 oxidized [2Fe-2S]-[ferredoxin] + 2 S-adenosyl-L-methionine + 4 H(+) = [[Fe-S] cluster scaffold protein] + N(6)-[(R)-dihydrolipoyl]-L-lysyl-[protein] + 4 Fe(3+) + 2 hydrogen sulfide + 2 5'-deoxyadenosine + 2 L-methionine + 2 reduced [2Fe-2S]-[ferredoxin]. Its pathway is protein modification; protein lipoylation via endogenous pathway; protein N(6)-(lipoyl)lysine from octanoyl-[acyl-carrier-protein]: step 2/2. Its function is as follows. Catalyzes the radical-mediated insertion of two sulfur atoms into the C-6 and C-8 positions of the octanoyl moiety bound to the lipoyl domains of lipoate-dependent enzymes, thereby converting the octanoylated domains into lipoylated derivatives. The polypeptide is Lipoyl synthase (Micrococcus luteus (strain ATCC 4698 / DSM 20030 / JCM 1464 / CCM 169 / CCUG 5858 / IAM 1056 / NBRC 3333 / NCIMB 9278 / NCTC 2665 / VKM Ac-2230) (Micrococcus lysodeikticus)).